The chain runs to 1803 residues: MEVHGDEVLSVDSGVSTPPSTGSGFRRPLETPGTEIGNLNLNPQNEVAVVGMACRLAGGNNSPEELWQSILNRKDASGEIPSMRWEPYYRRDIRNPKILDQTTKRGYFLDHVENFDAAFFGVSPKEAEQMDPQQRLSLEVTWEALEDAGIPPQSLSGSETAVFMGVNSDDYSKLLLEDIPNVEAWMGIGTAYCGVPNRISYHLNLMGPSTAVDAACASSLVAIHHGRQAILQGESEVAIVGGVNALCGPGLTRVLDKAGATSTEGRCLSFDEDAKGYGRGEGAAVVILKRLSTAIRDGDHIRAIIKGSAVAQDGKTNGIMAPNAKAQELVAWNALRTAGVDPLTVGYVEAHATSTPLGDPTEVSAVSAVYGKGRPEGNPCFIGSVKPNVGHLEAGAGAVGFIKAVMAVEKAIFPPQTNLKRLNSRIDWGQAGVKVVQETLEWPGNEDDVRRAGVCSYGYGGTVSHAIIEEFAQQLQRPTTNTTDEDPLPRILLLSAPQERRLALQARTQASWIAAEGRNRTLESIATTLSTRRGHHDYRAAIIAENHDDAVQKLSDIVNGKAAEWTTSSRVLDASCSKDVVWVFSGHGAQWTAMATDLLKDIVFYQTISRLDPIVEREMGFSALHSLASGDFESSIKVQVLTYLVQVGLAAILRSKGLEPQAVIGHSVGEIAASVAAGCLTAEEGALIVTRRANLYRRVMGAGAMVLVNIPFVDMEKELQGRTDLVAAIDSSPSSCVVSGATEAVLALVEDLKSRGVNAFRVKTDIPFHHPMLDQLSEPLREAMAGSLSPRKPRVRLYSTSAEDPRSMVARDIYYWTSNMVNPVRLTAAVQAAVDDGLRLFLEVSSHPIVSHSVRETMLDLGVEDFTVTNTMARNKPADKTILSSIAQLHCRGAVVNWKKQLPGPWALDVPLTTWDHKPYWRHIHTGPISASTLHDVDKHTLLGQRVPVAGETTMVFTTQMDDQTKPFPGSHPLHGSEIVPAAALVNTFLHATGATTLSNITLRVPVAISQPRDIQVVVSQNQIKICSRLTQKAGSGADEGSWLTHTTGQWEAGGSKNAPAQLDIAAIKARLANNKLADNFSIDYLDKVGVSAMGFPWAVTEHYGTLQEMIARVDVAPDVPATSPLPWDAASWAPILDAATSVGSTLFFDQPRLRMPAHIHGVQVYTTQPPLKVGYLYVEKAGDRDLAVHVSVCDELGTVLARFESMRFSEIEGTPGSNGSEESLVHQLAWPPAIYSEKPLTINNVVLVSRDKNVADLYCGSLKDRVSSITVLDAAADLLSLSQDSSSVLQAKDTAVVYVPGPLHSADSIPTAAHSFLMELLLLVKIIVNGSLPTKVFVLTDRVCESESATALAQSPIHGVSRIIAAEHPDQWGGLIDVETPGQFPLETMKYVQEADNIRISDGIPRIARLRPLPRDKLLPPSKQTSLLPRPESTYLITGGLGALGLEVAQFLVEKGARRLILVSRRALPPRREWADILADASSSLAPALETIQALEAQGATVHTLAVDISSPDAAPQLAVAIDSLSLPPVRGVVHAAGVLDSQLVLSATSDSVERVLAPKITGALVLGTVFPPKALDFFMLFSSCGQLLGFPGQASYASGNAFLDAFATSRRHQGDNAVAVQWTSWRSLGMAASTDFINAELASKGITDITRDEGFRAWMHISKYDIDQAAVLRSLAFEADEPLPTPILTDIAVRKAGSASSADAPSAAPKETNEMPESIPERRTWLDERIRDCVARVLQLGSSDEVDSKAALSDLGVDSVMTVSLRGQLQKTLGVKVPPTLTWSCPTVSHLVGWFLEKMGN.

The tract at residues 1-40 (MEVHGDEVLSVDSGVSTPPSTGSGFRRPLETPGTEIGNLN) is disordered. A compositionally biased stretch (low complexity) spans 13–24 (SGVSTPPSTGSG). Residues 44–470 (QNEVAVVGMA…GTVSHAIIEE (427 aa)) enclose the Ketosynthase family 3 (KS3) domain. Catalysis depends on for beta-ketoacyl synthase activity residues C216, H351, and H391. The region spanning 581–894 (VWVFSGHGAQ…SIAQLHCRGA (314 aa)) is the Malonyl-CoA:ACP transacylase (MAT) domain. S667 acts as the For malonyltransferase activity in catalysis. Residues 940–1058 (HTLLGQRVPV…GQWEAGGSKN (119 aa)) form an N-terminal hotdog fold region. The PKS/mFAS DH domain maps to 940 to 1218 (HTLLGQRVPV…FSEIEGTPGS (279 aa)). The active-site Proton acceptor; for thioesterase activity is the H972. The segment at 1073 to 1218 (ANNKLADNFS…FSEIEGTPGS (146 aa)) is C-terminal hotdog fold. The active-site Proton donor; for thioesterase activity is the D1129. The segment at 1141-1262 (TSVGSTLFFD…KNVADLYCGS (122 aa)) is required for homotetramer formation. The Ketoreductase (KR) domain occupies 1434–1628 (STYLITGGLG…AVAVQWTSWR (195 aa)). Positions 1701 to 1710 (ASSADAPSAA) are enriched in low complexity. Residues 1701 to 1721 (ASSADAPSAAPKETNEMPESI) are disordered. The region spanning 1726 to 1801 (TWLDERIRDC…HLVGWFLEKM (76 aa)) is the Carrier domain. S1761 is subject to O-(pantetheine 4'-phosphoryl)serine. The tract at residues 1783–1803 (LTWSCPTVSHLVGWFLEKMGN) is required for catalytic activity.

In terms of assembly, homotetramer.

It catalyses the reaction 3 malonyl-CoA + acetyl-CoA + NADPH + 3 H(+) = 6-methylsalicylate + 3 CO2 + NADP(+) + 4 CoA + H2O. The protein operates within secondary metabolite biosynthesis. In terms of biological role, 6-methylsalicylic acid synthase; part of the gene cluster that mediates the biosynthesis of terreic acid, a quinone epoxide inhibitor of Bruton's tyrosine kinase. The first step of the pathway is the synthesis of 6-methylsalicylic acid (6-MSA) by the 6-methylsalicylic acid synthase atX. In the biosynthesis of 6-MSA, atX utilizes one acetyl-CoA and three malonyl-CoAs as its substrates and catalyzes a series of programmed reactions including Claisen condensation, reduction, aldol cyclization, and the hydrolytic cleavage that yields 6-MSA. The 6-methylsalicylate 1-monooxygenase atA then catalyzes the decarboxylative hydroxylation of 6-MSA to 3-methylcatechol. The next step is the conversion of 3-methylcatechol to 3-methyl-1,2,4-benzenetriol by cytochrome P450 monooxygenase atE, which is enhanced by cytochrome P450 monooxygenase atG. Then, the epoxidase atD catalyzes the epoxidation and hydroxyl oxidation of 3-methyl-1,2,4-benzenetriol to terremutin. Lastly, GMC oxidoreductase atC oxidizes terremutin to terreic acid. In Aspergillus terreus (strain NIH 2624 / FGSC A1156), this protein is 6-methylsalicylic acid synthase.